A 122-amino-acid chain; its full sequence is Large ribosomal subunit protein uL14 (122 aa).

This sequence belongs to the universal ribosomal protein uL14 family. In terms of assembly, part of the 50S ribosomal subunit. Forms a cluster with proteins L3 and L19. In the 70S ribosome, L14 and L19 interact and together make contacts with the 16S rRNA in bridges B5 and B8.

Its function is as follows. Binds to 23S rRNA. Forms part of two intersubunit bridges in the 70S ribosome. This Sphingopyxis alaskensis (strain DSM 13593 / LMG 18877 / RB2256) (Sphingomonas alaskensis) protein is Large ribosomal subunit protein uL14.